The chain runs to 1399 residues: DNA-directed RNA polymerase subunit beta' (1399 aa).

Cys-71, Cys-73, Cys-86, and Cys-89 together coordinate Zn(2+). 3 residues coordinate Mg(2+): Asp-462, Asp-464, and Asp-466. The Zn(2+) site is built by Cys-810, Cys-884, Cys-891, and Cys-894. The segment at 1379-1399 (KQAAIVPSQPEPQPLALPPAE) is disordered. Residues 1387-1399 (QPEPQPLALPPAE) show a composition bias toward pro residues.

It belongs to the RNA polymerase beta' chain family. As to quaternary structure, the RNAP catalytic core consists of 2 alpha, 1 beta, 1 beta' and 1 omega subunit. When a sigma factor is associated with the core the holoenzyme is formed, which can initiate transcription. Mg(2+) serves as cofactor. Zn(2+) is required as a cofactor.

It catalyses the reaction RNA(n) + a ribonucleoside 5'-triphosphate = RNA(n+1) + diphosphate. DNA-dependent RNA polymerase catalyzes the transcription of DNA into RNA using the four ribonucleoside triphosphates as substrates. This is DNA-directed RNA polymerase subunit beta' from Bradyrhizobium sp. (strain ORS 278).